Here is a 224-residue protein sequence, read N- to C-terminus: Deoxyribose-phosphate aldolase (224 aa).

The active-site Proton donor/acceptor is Asp-93. Lys-159 serves as the catalytic Schiff-base intermediate with acetaldehyde. Lys-189 serves as the catalytic Proton donor/acceptor.

It belongs to the DeoC/FbaB aldolase family. DeoC type 1 subfamily.

The protein resides in the cytoplasm. It carries out the reaction 2-deoxy-D-ribose 5-phosphate = D-glyceraldehyde 3-phosphate + acetaldehyde. Its pathway is carbohydrate degradation; 2-deoxy-D-ribose 1-phosphate degradation; D-glyceraldehyde 3-phosphate and acetaldehyde from 2-deoxy-alpha-D-ribose 1-phosphate: step 2/2. In terms of biological role, catalyzes a reversible aldol reaction between acetaldehyde and D-glyceraldehyde 3-phosphate to generate 2-deoxy-D-ribose 5-phosphate. This is Deoxyribose-phosphate aldolase from Mycobacterium bovis (strain ATCC BAA-935 / AF2122/97).